Here is a 513-residue protein sequence, read N- to C-terminus: Cytochrome P450 72A552 (513 aa).

Residues 2–22 (EISVASVTVSVVIAVVTWWVW) form a helical membrane-spanning segment. A heme-binding site is contributed by Cys-460.

This sequence belongs to the cytochrome P450 family. The cofactor is heme.

Its subcellular location is the membrane. The enzyme catalyses oleanolate + reduced [NADPH--hemoprotein reductase] + O2 = hederagenin + oxidized [NADPH--hemoprotein reductase] + H2O + H(+). Functionally, catalyzes the oxidation of oleanolate at the C-23 position to form hederagenin. The sequence is that of Cytochrome P450 72A552 from Barbarea vulgaris (Yellow rocket).